Reading from the N-terminus, the 101-residue chain is Small ribosomal subunit protein uS14m (101 aa).

The protein belongs to the universal ribosomal protein uS14 family. Component of the mitochondrial ribosome small subunit (28S) which comprises a 12S rRNA and about 30 distinct proteins. Interacts with LIAT1.

It localises to the mitochondrion. This Dictyostelium discoideum (Social amoeba) protein is Small ribosomal subunit protein uS14m (mrps14).